Consider the following 497-residue polypeptide: UDP-N-acetylmuramoyl-L-alanyl-D-glutamate--2,6-diaminopimelate ligase (497 aa).

Ser-32 is a UDP-N-acetyl-alpha-D-muramoyl-L-alanyl-D-glutamate binding site. Residue 113-119 participates in ATP binding; sequence GTNGKTT. Residues 155–156, Ser-182, Gln-188, and Arg-190 contribute to the UDP-N-acetyl-alpha-D-muramoyl-L-alanyl-D-glutamate site; that span reads TT. Lys-222 carries the N6-carboxylysine modification. Meso-2,6-diaminopimelate-binding positions include Arg-385, 409–412, Gly-460, and Glu-464; that span reads DNPR. A Meso-diaminopimelate recognition motif motif is present at residues 409–412; the sequence is DNPR.

This sequence belongs to the MurCDEF family. MurE subfamily. It depends on Mg(2+) as a cofactor. In terms of processing, carboxylation is probably crucial for Mg(2+) binding and, consequently, for the gamma-phosphate positioning of ATP.

The protein localises to the cytoplasm. It carries out the reaction UDP-N-acetyl-alpha-D-muramoyl-L-alanyl-D-glutamate + meso-2,6-diaminopimelate + ATP = UDP-N-acetyl-alpha-D-muramoyl-L-alanyl-gamma-D-glutamyl-meso-2,6-diaminopimelate + ADP + phosphate + H(+). It participates in cell wall biogenesis; peptidoglycan biosynthesis. In terms of biological role, catalyzes the addition of meso-diaminopimelic acid to the nucleotide precursor UDP-N-acetylmuramoyl-L-alanyl-D-glutamate (UMAG) in the biosynthesis of bacterial cell-wall peptidoglycan. This Thermosynechococcus vestitus (strain NIES-2133 / IAM M-273 / BP-1) protein is UDP-N-acetylmuramoyl-L-alanyl-D-glutamate--2,6-diaminopimelate ligase.